Here is a 701-residue protein sequence, read N- to C-terminus: T-cell immunomodulatory protein homolog (701 aa).

Residues 1-29 (MVKCGKYVLILELLLLTLLYNLIKRVSNS) form the signal peptide. At 30–657 (GETVSSFVDG…IQLSVNPSNK (628 aa)) the chain is on the extracellular side. Residues asparagine 148, asparagine 180, asparagine 217, asparagine 258, asparagine 458, asparagine 522, and asparagine 571 are each glycosylated (N-linked (GlcNAc...) asparagine). The chain crosses the membrane as a helical span at residues 658 to 678 (FYSIIYITLICLSVIGVLIFI). The Cytoplasmic portion of the chain corresponds to 679 to 701 (LDRKEKIEDSKEEMGFKSHFVIG).

This sequence belongs to the TIP family.

It localises to the membrane. Its function is as follows. May protect the parasite against attack by the host immune system by immunomodulation. The sequence is that of T-cell immunomodulatory protein homolog from Plasmodium yoelii yoelii.